We begin with the raw amino-acid sequence, 426 residues long: Mediator of RNA polymerase II transcription subunit 1 (426 aa).

The tract at residues 324-356 (VGDAPAPAAQPPLHRRRSSNKGCRRASAAESAT) is disordered. Residues 336 to 347 (LHRRRSSNKGCR) show a composition bias toward basic residues.

The protein belongs to the Mediator complex subunit 1 family. In terms of assembly, component of the Mediator complex.

It is found in the nucleus. In terms of biological role, component of the Mediator complex, a coactivator involved in the regulated transcription of nearly all RNA polymerase II-dependent genes. Mediator functions as a bridge to convey information from gene-specific regulatory proteins to the basal RNA polymerase II transcription machinery. Mediator is recruited to promoters by direct interactions with regulatory proteins and serves as a scaffold for the assembly of a functional preinitiation complex with RNA polymerase II and the general transcription factors. The sequence is that of Mediator of RNA polymerase II transcription subunit 1 (MED1) from Eremothecium gossypii (strain ATCC 10895 / CBS 109.51 / FGSC 9923 / NRRL Y-1056) (Yeast).